A 97-amino-acid polypeptide reads, in one-letter code: Co-chaperonin GroES (97 aa).

Belongs to the GroES chaperonin family. As to quaternary structure, heptamer of 7 subunits arranged in a ring. Interacts with the chaperonin GroEL.

Its subcellular location is the cytoplasm. Functionally, together with the chaperonin GroEL, plays an essential role in assisting protein folding. The GroEL-GroES system forms a nano-cage that allows encapsulation of the non-native substrate proteins and provides a physical environment optimized to promote and accelerate protein folding. GroES binds to the apical surface of the GroEL ring, thereby capping the opening of the GroEL channel. The chain is Co-chaperonin GroES from Escherichia fergusonii (strain ATCC 35469 / DSM 13698 / CCUG 18766 / IAM 14443 / JCM 21226 / LMG 7866 / NBRC 102419 / NCTC 12128 / CDC 0568-73).